Consider the following 906-residue polypeptide: Protein translocase subunit SecA (906 aa).

ATP is bound by residues Q86, 104 to 108 (GEGKT), and D499. The span at 834-847 (KLQKNMRESREDPA) shows a compositional bias: basic and acidic residues. Residues 834–887 (KLQKNMRESREDPAFSKYNAGSSLETDLKPVVSRVDPKDRNPDDPTSWGRVSRN) form a disordered region. Positions 890, 892, 901, and 902 each coordinate Zn(2+).

This sequence belongs to the SecA family. Monomer and homodimer. Part of the essential Sec protein translocation apparatus which comprises SecA, SecYEG and auxiliary proteins SecDF-YajC and YidC. The cofactor is Zn(2+).

It localises to the cell inner membrane. Its subcellular location is the cytoplasm. It catalyses the reaction ATP + H2O + cellular proteinSide 1 = ADP + phosphate + cellular proteinSide 2.. In terms of biological role, part of the Sec protein translocase complex. Interacts with the SecYEG preprotein conducting channel. Has a central role in coupling the hydrolysis of ATP to the transfer of proteins into and across the cell membrane, serving both as a receptor for the preprotein-SecB complex and as an ATP-driven molecular motor driving the stepwise translocation of polypeptide chains across the membrane. This Rickettsia felis (strain ATCC VR-1525 / URRWXCal2) (Rickettsia azadi) protein is Protein translocase subunit SecA.